A 278-amino-acid chain; its full sequence is Coiled-coil domain-containing protein 106 (278 aa).

A coiled-coil region spans residues 61-99; it reads AQLHLALERNSWLQKRIEDLEEERDFLRCQLDKFISSAR. The span at 102–119 shows a compositional bias: basic and acidic residues; sequence ADDHCRGKPGPRRAEGDG. The interval 102–174 is disordered; the sequence is ADDHCRGKPG…KPKARERQRV (73 aa). Residue serine 128 is modified to Phosphoserine. Positions 131-144 are enriched in low complexity; that stretch reads ESAASSLSGASEEG. Positions 150–166 are enriched in basic residues; that stretch reads KRQKQKGGPGRRRFGKP. Positions 151-164 match the Bipartite nuclear localization signal motif; that stretch reads RQKQKGGPGRRRFG.

In terms of assembly, interacts with p53/TP53.

The protein localises to the nucleus. Functionally, promotes the degradation of p53/TP53 protein and inhibits its transactivity. This Bos taurus (Bovine) protein is Coiled-coil domain-containing protein 106 (CCDC106).